We begin with the raw amino-acid sequence, 37 residues long: MKVRSSVKKMCDNCKVIRRHGRVLVICSNVKHKQRQG.

It belongs to the bacterial ribosomal protein bL36 family.

The polypeptide is Large ribosomal subunit protein bL36 (Deinococcus deserti (strain DSM 17065 / CIP 109153 / LMG 22923 / VCD115)).